The primary structure comprises 156 residues: Ribosomal RNA large subunit methyltransferase H (156 aa).

Residues L73, G104, and L123–L128 contribute to the S-adenosyl-L-methionine site.

This sequence belongs to the RNA methyltransferase RlmH family. Homodimer.

The protein localises to the cytoplasm. It carries out the reaction pseudouridine(1915) in 23S rRNA + S-adenosyl-L-methionine = N(3)-methylpseudouridine(1915) in 23S rRNA + S-adenosyl-L-homocysteine + H(+). Its function is as follows. Specifically methylates the pseudouridine at position 1915 (m3Psi1915) in 23S rRNA. This is Ribosomal RNA large subunit methyltransferase H from Aliivibrio fischeri (strain ATCC 700601 / ES114) (Vibrio fischeri).